Consider the following 217-residue polypeptide: Choline transport system permease protein OpuBB (217 aa).

Positions 19–198 (TYEHITISLI…ILAIVIDYVL (180 aa)) constitute an ABC transmembrane type-1 domain. A run of 6 helical transmembrane segments spans residues 23–43 (ITIS…LGVV), 52–74 (GTII…AFFI), 84–101 (AIVA…RNTY), 128–148 (LVEL…STIY), 150–170 (IGWA…YIFI), and 180–200 (IIGG…VLAV).

Belongs to the binding-protein-dependent transport system permease family. CysTW subfamily.

The protein resides in the cell membrane. Involved in a high affinity multicomponent binding-protein-dependent transport system for choline; probably responsible for the translocation of the substrate across the membrane. This chain is Choline transport system permease protein OpuBB (opuBB), found in Bacillus subtilis (strain 168).